Here is a 229-residue protein sequence, read N- to C-terminus: Putative N-acetylmannosamine-6-phosphate 2-epimerase (229 aa).

It belongs to the NanE family.

It carries out the reaction an N-acyl-D-glucosamine 6-phosphate = an N-acyl-D-mannosamine 6-phosphate. The protein operates within amino-sugar metabolism; N-acetylneuraminate degradation; D-fructose 6-phosphate from N-acetylneuraminate: step 3/5. Its function is as follows. Converts N-acetylmannosamine-6-phosphate (ManNAc-6-P) to N-acetylglucosamine-6-phosphate (GlcNAc-6-P). In Shigella sonnei (strain Ss046), this protein is Putative N-acetylmannosamine-6-phosphate 2-epimerase.